A 674-amino-acid chain; its full sequence is Dymeclin (674 aa).

Glycine 2 is lipidated: N-myristoyl glycine.

It belongs to the dymeclin family. In terms of assembly, interacts with GOLM1 and PPIB. Myristoylated in vitro; myristoylation is not essential for protein targeting to Golgi compartment.

The protein resides in the cytoplasm. It localises to the golgi apparatus. It is found in the membrane. Necessary for correct organization of Golgi apparatus. Involved in bone development. This chain is Dymeclin (Dym), found in Rattus norvegicus (Rat).